The sequence spans 477 residues: Interferon gamma receptor 1 (477 aa).

The first 25 residues, 1–25 (MGPQAAAGRMILLVVLMLSAKVGSG), serve as a signal peptide directing secretion. The Extracellular portion of the chain corresponds to 26 to 254 (ALTSTEDPEP…PPFHDDRKDS (229 aa)). 2 N-linked (GlcNAc...) asparagine glycosylation sites follow: asparagine 61 and asparagine 85. 4 disulfide bridges follow: cysteine 83-cysteine 91, cysteine 128-cysteine 174, cysteine 203-cysteine 208, and cysteine 222-cysteine 243. The helical transmembrane segment at 255 to 275 (IWILVVAPLTVFTVVILVFAY) threads the bilayer. Residues 276–477 (WYTKKNSFKR…RLTGEAQELS (202 aa)) lie on the Cytoplasmic side of the membrane. 2 disordered regions span residues 335–386 (TVTA…LSSN) and 402–446 (SDSG…SGYD). Serine 362 carries the post-translational modification Phosphoserine. Phosphothreonine is present on threonine 367. Serine 370 is modified (phosphoserine). A phosphothreonine mark is found at threonine 373 and threonine 375. Positions 375–386 (TQRRSFSLLSSN) are enriched in polar residues. Phosphoserine occurs at positions 379 and 402. Low complexity predominate over residues 402 to 416 (SDSGLVGSGSSISDL). Phosphotyrosine is present on tyrosine 445.

This sequence belongs to the type II cytokine receptor family. As to quaternary structure, monomer. Heterodimer with IFNGR2, to form the IFNG receptor complex. Interacts with JAK1. Interacts (when phosphorylated) with STAT1. Interacts with SOCS1. Post-translationally, phosphorylated at Ser/Thr residues. Phosphorylation of Tyr-445 is required for IFNG receptor signal transduction. Influenza virus infection leads to phosphorylation in a CSNK1A1-dependent manner. Ubiquitinated after phosphorylation in a CSNK1A1-dependent manner, leading to the lysosome-dependent degradation. Proteasomally degraded through 'Lys-48'-mediated ubiquitination. Ubiquitination is necessary for efficient IFNGR1 signaling.

The protein resides in the cell membrane. Receptor subunit for interferon gamma/INFG that plays crucial roles in antimicrobial, antiviral, and antitumor responses by activating effector immune cells and enhancing antigen presentation (, PubMed:20926559, PubMed:27286456). Associates with transmembrane accessory factor IFNGR2 to form a functional receptor. Upon ligand binding, the intracellular domain of IFNGR1 opens out to allow association of downstream signaling components JAK1 and JAK2. In turn, activated JAK1 phosphorylates IFNGR1 to form a docking site for STAT1. Subsequent phosphorylation of STAT1 leads to its dimerization, translocation to the nucleus, and stimulation of target gene transcription. STAT3 can also be activated in a similar manner although activation seems weaker. IFNGR1 intracellular domain phosphorylation also provides a docking site for SOCS1 that regulates the JAK-STAT pathway by competing with STAT1 binding to IFNGR1. The chain is Interferon gamma receptor 1 from Mus musculus (Mouse).